A 414-amino-acid polypeptide reads, in one-letter code: Phosphoglycerate kinase (414 aa).

Substrate is bound by residues 19–21, R34, 57–60, R114, and R154; these read DLN and HQSK. ATP contacts are provided by residues E332 and 358–361; that span reads GGHS.

It belongs to the phosphoglycerate kinase family. As to quaternary structure, monomer.

Its subcellular location is the cytoplasm. The enzyme catalyses (2R)-3-phosphoglycerate + ATP = (2R)-3-phospho-glyceroyl phosphate + ADP. It participates in carbohydrate degradation; glycolysis; pyruvate from D-glyceraldehyde 3-phosphate: step 2/5. The chain is Phosphoglycerate kinase from Thermococcus onnurineus (strain NA1).